Here is a 655-residue protein sequence, read N- to C-terminus: p-hydroxybenzoic acid efflux pump subunit AaeB (655 aa).

A run of 11 helical transmembrane segments spans residues 13–33 (FAVKLATAIVLALFVGFHFQL), 38–58 (WAVLTAAIVAAGPAFAAGGEP), 69–89 (LRIIGTFIGCIAGLVIIIAMI), 93–113 (LLMILVCCIWAGFCTWISSLV), 121–141 (WGLAGYTALIIVITIQPEPLL), 152–172 (EIVIGIVCAIMADLLFSPRSI), 370–390 (LFWLWTGWTSGSGAMVMIAVV), 407–427 (FIYGTLAALPLGLLYFLVIIP), 431–451 (QSMLLLCISLAVLGFFLGIEV), 459–479 (MGALASTINIIVLDNPMTFHF), and 482–502 (FLDSALGQIVGCVLAFTVILL).

It belongs to the aromatic acid exporter ArAE (TC 2.A.85) family.

Its subcellular location is the cell inner membrane. Forms an efflux pump with AaeA. Could function as a metabolic relief valve, allowing to eliminate certain compounds when they accumulate to high levels in the cell. The polypeptide is p-hydroxybenzoic acid efflux pump subunit AaeB (Escherichia coli (strain K12 / MC4100 / BW2952)).